The primary structure comprises 94 residues: Protein EGG APPARATUS-1 (94 aa).

Topologically, residues 1-15 (MSSCPAIVNMKDDDG) are cytoplasmic. Residues 16–36 (IGAMGAAVAFAAMGVFGIYFL) traverse the membrane as a helical; Signal-anchor for type II membrane protein segment. Residues 37 to 94 (WPVVGPTSAGMMMKAPGAAGWVICRAVFEANPQLYFTILRTAGAAAAAATFAACSIAS) lie on the Extracellular side of the membrane.

Post-translationally, possible proteolysis of the C-terminal region from the predicted transmembrane domain to permit secretion and transport of the mature protein to the cell walls of the nucellus, allowing the spreading from the egg cell apparatus to the micropylar opening of the ovule. As to expression, expressed only in the egg apparatus, consisting of the egg cell and two synergids. Not detected in the central cell, antipodals, and nucellar and integumental cells.

Its subcellular location is the membrane. Its function is as follows. Involved in short-range signaling required for pollen tube attraction by the female gametophyte. Required for female fertility. This Zea mays (Maize) protein is Protein EGG APPARATUS-1 (Ea1).